Consider the following 326-residue polypeptide: HTH-type transcriptional regulator BlaA (326 aa).

Positions 1–59 (MDVVNACRAFVKVSERGSFTVGAAAAQMSQSVASRRVAALEKHFGERLFDRASRRPSLT) constitute an HTH lysR-type domain. The H-T-H motif DNA-binding region spans 19–38 (FTVGAAAAQMSQSVASRRVA). Positions 289-326 (TADHGPDPATGAGPGADAGTEPGARAEPGAPEEGAQAC) are disordered. Residues 295-326 (DPATGAGPGADAGTEPGARAEPGAPEEGAQAC) are compositionally biased toward low complexity.

This sequence belongs to the LysR transcriptional regulatory family.

In terms of biological role, positive regulator of the expression of the gene (blaB) for beta-lactamase. It binds to the blaL-blaA intercistronic region. In Streptomyces cacaoi, this protein is HTH-type transcriptional regulator BlaA (blaA).